Consider the following 277-residue polypeptide: Urease accessory protein UreD (277 aa).

It belongs to the UreD family. UreD, UreF and UreG form a complex that acts as a GTP-hydrolysis-dependent molecular chaperone, activating the urease apoprotein by helping to assemble the nickel containing metallocenter of UreC. The UreE protein probably delivers the nickel.

Its subcellular location is the cytoplasm. Functionally, required for maturation of urease via the functional incorporation of the urease nickel metallocenter. This Pseudomonas putida (strain GB-1) protein is Urease accessory protein UreD.